Consider the following 385-residue polypeptide: 1-deoxy-D-xylulose 5-phosphate reductoisomerase (385 aa).

The NADPH site is built by Thr-10, Gly-11, Ser-12, Ile-13, Lys-37, and Asn-124. Lys-125 is a 1-deoxy-D-xylulose 5-phosphate binding site. Glu-126 provides a ligand contact to NADPH. A Mn(2+)-binding site is contributed by Asp-150. 1-deoxy-D-xylulose 5-phosphate contacts are provided by Ser-151, Glu-152, Ser-176, and His-199. Mn(2+) is bound at residue Glu-152. Residue Gly-205 coordinates NADPH. 4 residues coordinate 1-deoxy-D-xylulose 5-phosphate: Ser-212, Asn-217, Lys-218, and Glu-221. Glu-221 is a binding site for Mn(2+).

This sequence belongs to the DXR family. Mg(2+) serves as cofactor. It depends on Mn(2+) as a cofactor.

It carries out the reaction 2-C-methyl-D-erythritol 4-phosphate + NADP(+) = 1-deoxy-D-xylulose 5-phosphate + NADPH + H(+). Its pathway is isoprenoid biosynthesis; isopentenyl diphosphate biosynthesis via DXP pathway; isopentenyl diphosphate from 1-deoxy-D-xylulose 5-phosphate: step 1/6. Catalyzes the NADPH-dependent rearrangement and reduction of 1-deoxy-D-xylulose-5-phosphate (DXP) to 2-C-methyl-D-erythritol 4-phosphate (MEP). In Clostridium novyi (strain NT), this protein is 1-deoxy-D-xylulose 5-phosphate reductoisomerase.